The primary structure comprises 494 residues: Tripartite motif-containing protein 5 (494 aa).

The residue at position 2 (Ala2) is an N-acetylalanine. An RING-type zinc finger spans residues 15–59 (CPICLELLTEPLSLDCGHSFCQACITANHKESTPHQGERSCPLCR). Position 86 is a phosphoserine (Ser86). The B box-type zinc-finger motif lies at 91–132 (QKVGHCARHGEKLLLFCEQDGNVICWLCERSQEHRGHHTFLV). Positions 96, 99, 118, and 124 each coordinate Zn(2+). Positions 131 to 223 (LVEEVAEKYQ…RLVQSESDMA (93 aa)) form a coiled coil. Residues 186–199 (FKQLRDILDCEESK) form a required for interaction with GABARAP and for autophagy region. The B30.2/SPRY domain maps to 280–494 (PDLKGMLQAF…LPMTLCSPSS (215 aa)).

It belongs to the TRIM/RBCC family. Can form homodimers and homotrimers. In addition to lower-order dimerization, also exhibits a higher-order multimerization and both low- and high-order multimerizations are essential for its restriction activity. Interacts with BTBD1 and BTBD2. Interacts with PSMC4, PSMC5, PSMD7 and HSPA8/HSC70. Interacts (via B30.2/SPRY domain) with HSPA1A/B. Interacts with PSMC2, MAP3K7/TAK1, TAB2 and TAB3. Interacts with SQSTM1. Interacts with TRIM6 and TRIM34. Interacts with ULK1 (phosphorylated form), GABARAP, GABARAPL1, GABARAPL2, MAP1LC3A, MAP1LC3C and BECN1. In terms of processing, degraded in a proteasome-independent fashion in the absence of viral infection but in a proteasome-dependent fashion following exposure to restriction sensitive virus. Post-translationally, autoubiquitinated in a RING finger- and UBE2D2-dependent manner. Monoubiquitinated by TRIM21. Deubiquitinated by Yersinia YopJ. Ubiquitination may not lead to proteasomal degradation.

It localises to the cytoplasm. The protein resides in the nucleus. The catalysed reaction is S-ubiquitinyl-[E2 ubiquitin-conjugating enzyme]-L-cysteine + [acceptor protein]-L-lysine = [E2 ubiquitin-conjugating enzyme]-L-cysteine + N(6)-ubiquitinyl-[acceptor protein]-L-lysine.. The protein operates within protein modification; protein ubiquitination. Functionally, capsid-specific restriction factor that prevents infection from non-host-adapted retroviruses. Blocks viral replication early in the life cycle, after viral entry but before reverse transcription. In addition to acting as a capsid-specific restriction factor, also acts as a pattern recognition receptor that activates innate immune signaling in response to the retroviral capsid lattice. Binding to the viral capsid triggers its E3 ubiquitin ligase activity, and in concert with the heterodimeric ubiquitin conjugating enzyme complex UBE2V1-UBE2N (also known as UBC13-UEV1A complex) generates 'Lys-63'-linked polyubiquitin chains, which in turn are catalysts in the autophosphorylation of the MAP3K7/TAK1 complex (includes TAK1, TAB2, and TAB3). Activation of the MAP3K7/TAK1 complex by autophosphorylation results in the induction and expression of NF-kappa-B and MAPK-responsive inflammatory genes, thereby leading to an innate immune response in the infected cell. Plays a role in regulating autophagy through activation of autophagy regulator BECN1 by causing its dissociation from its inhibitors BCL2 and TAB2. The chain is Tripartite motif-containing protein 5 (TRIM5) from Saguinus oedipus (Cotton-top tamarin).